The chain runs to 234 residues: Purine nucleoside phosphorylase DeoD-type (234 aa).

His-4 lines the a purine D-ribonucleoside pocket. Phosphate-binding positions include Gly-20, Arg-24, Arg-43, and 87-90 (RIGS). Residues Glu-162, 179 to 181 (EME), and 203 to 204 (SD) each bind a purine D-ribonucleoside. Asp-204 serves as the catalytic Proton donor.

The protein belongs to the PNP/UDP phosphorylase family. In terms of assembly, homohexamer; trimer of homodimers.

The catalysed reaction is a purine D-ribonucleoside + phosphate = a purine nucleobase + alpha-D-ribose 1-phosphate. It catalyses the reaction a purine 2'-deoxy-D-ribonucleoside + phosphate = a purine nucleobase + 2-deoxy-alpha-D-ribose 1-phosphate. Catalyzes the reversible phosphorolytic breakdown of the N-glycosidic bond in the beta-(deoxy)ribonucleoside molecules, with the formation of the corresponding free purine bases and pentose-1-phosphate. The polypeptide is Purine nucleoside phosphorylase DeoD-type (Roseobacter denitrificans (strain ATCC 33942 / OCh 114) (Erythrobacter sp. (strain OCh 114))).